Reading from the N-terminus, the 425-residue chain is Arogenate dehydratase 5, chloroplastic (425 aa).

The N-terminal 38 residues, 1–38 (MQTISPAFSCDLKSVIQPNLTAKKARYSHVNGKRVSVR), are a transit peptide targeting the chloroplast. Residues 127–304 (RVAYQGVPGA…NVTRFLMLAR (178 aa)) form the Prephenate dehydratase domain. One can recognise an ACT domain in the interval 320-411 (VFAAQEHKGT…SFLRVLGSYP (92 aa)).

As to expression, expressed in roots, leaves, stems, flowers and siliques. More abundant in stems and roots.

It is found in the plastid. The protein localises to the chloroplast stroma. It catalyses the reaction L-arogenate + H(+) = L-phenylalanine + CO2 + H2O. The protein operates within amino-acid biosynthesis; L-phenylalanine biosynthesis; L-phenylalanine from L-arogenate: step 1/1. In terms of biological role, converts the prephenate produced from the shikimate-chorismate pathway into phenylalanine. This is Arogenate dehydratase 5, chloroplastic from Arabidopsis thaliana (Mouse-ear cress).